The sequence spans 667 residues: METLESELTCPICLELLEDPLLLPCAHSLCFNCAHRILVSHCATNEPVESINAFQCPTCRHVITLSQRGLDGLKRNVTLQNIIDRFQKASVSGPNSPSETRRERAFDANTMSSAEKVLCQFCDQDPAQDAVKTCVTCEVSYCDECLKATHPNKKPFTGHRLIEPIPDSHIRGLMCLEHEDEKVNMYCVTDDQLICALCKLVGRHRDHQVAALSERYDKLKQNLESNLTNLIKRNTELETLLAKLIQTCQHVEVNASRQEAKLTEECDLLIEIIQQRRQIIGTKIKEGKVIRLRKLAQQIANCKQCIERSASLISQAEHSLKENDHARFLQTAKNITERVSMATASSQVLIPEINLNDTFDTFALDFSREKKLLECLDYLTAPNPPTIREELCTASYDTITVHWTSDDEFSVVSYELQYTIFTGQANVVSLCNSADSWMIVPNIKQNHYTVHGLQSGTKYIFMVKAINQAGSRSSEPGKLKTNSQPFKLDPKSAHRKLKVSHDNLTVERDESSSKKSHTPERFTSQGSYGVAGNVFIDSGRHYWEVVISGSTWYAIGLAYKSAPKHEWIGKNSASWALCRCNNNWVVRHNSKEIPIEPAPHLRRVGILLDYDNGSIAFYDALNSIHLYTFDVALAQPVCPTFTVWNKCLTIITGLPIPDHLDCTEQLP.

Residues 10 to 60 (CPICLELLEDPLLLPCAHSLCFNCAHRILVSHCATNEPVESINAFQCPTCR) form an RING-type zinc finger. 2 positions are modified to phosphoserine: Ser-92 and Ser-96. 2 consecutive B box-type zinc fingers follow at residues 116 to 165 (KVLC…IEPI) and 172 to 212 (GLMC…VAAL). 12 residues coordinate Zn(2+): Cys-119, Cys-122, Cys-134, Cys-137, Cys-142, Cys-145, His-150, His-159, Cys-175, His-178, Cys-198, and His-204. Residues 205–264 (RDHQVAALSERYDKLKQNLESNLTNLIKRNTELETLLAKLIQTCQHVEVNASRQEAKLTE) adopt a coiled-coil conformation. The COS domain maps to 320 to 379 (LKENDHARFLQTAKNITERVSMATASSQVLIPEINLNDTFDTFALDFSREKKLLECLDYL). Residues 381 to 484 (APNPPTIREE…EPGKLKTNSQ (104 aa)) form the Fibronectin type-III domain. The span at 471 to 485 (SRSSEPGKLKTNSQP) shows a compositional bias: polar residues. The segment at 471–524 (SRSSEPGKLKTNSQPFKLDPKSAHRKLKVSHDNLTVERDESSSKKSHTPERFTS) is disordered. The B30.2/SPRY domain occupies 482–659 (NSQPFKLDPK…IITGLPIPDH (178 aa)). The span at 499–520 (VSHDNLTVERDESSSKKSHTPE) shows a compositional bias: basic and acidic residues. The residue at position 511 (Ser-511) is a Phosphoserine.

This sequence belongs to the TRIM/RBCC family. As to quaternary structure, homodimer or heterodimer with MID2. Interacts with IGBP1.

The protein resides in the cytoplasm. It localises to the cytoskeleton. It carries out the reaction S-ubiquitinyl-[E2 ubiquitin-conjugating enzyme]-L-cysteine + [acceptor protein]-L-lysine = [E2 ubiquitin-conjugating enzyme]-L-cysteine + N(6)-ubiquitinyl-[acceptor protein]-L-lysine.. Has E3 ubiquitin ligase activity towards IGBP1, promoting its monoubiquitination, which results in deprotection of the catalytic subunit of protein phosphatase PP2A, and its subsequent degradation by polyubiquitination. The chain is E3 ubiquitin-protein ligase Midline-1 (Mid1) from Mus spretus (Western Mediterranean mouse).